The sequence spans 106 residues: MSDSIISFAAFILADAGLEITSDNLLTITKAAGANVDNVWADVYAKALEGKDLKEILSGFHNAGPVAGAGAASGAAAAGGDAAAEEEKEEEAAEESDDDMGFGLFD.

S2 bears the N-acetylserine mark. A compositionally biased stretch (low complexity) spans 69-82 (AGAASGAAAAGGDA). Positions 69–106 (AGAASGAAAAGGDAAAEEEKEEEAAEESDDDMGFGLFD) are disordered. The span at 83–100 (AAEEEKEEEAAEESDDDM) shows a compositional bias: acidic residues. Phosphoserine is present on S96.

This sequence belongs to the eukaryotic ribosomal protein P1/P2 family. In terms of assembly, component of the large ribosomal subunit (LSU). Mature yeast ribosomes consist of a small (40S) and a large (60S) subunit. The 40S small subunit contains 1 molecule of ribosomal RNA (18S rRNA) and 33 different proteins (encoded by 57 genes). The large 60S subunit contains 3 rRNA molecules (25S, 5.8S and 5S rRNA) and 46 different proteins (encoded by 81 genes). The 5 acidic ribosomal P-proteins form the stalk structure of the 60S subunit. They are organized as a pentameric complex in which uL10/P0 interacts with 2 heterodimers, P1A-P2B and P1B-P2A.

It localises to the cytoplasm. In terms of biological role, component of the ribosome, a large ribonucleoprotein complex responsible for the synthesis of proteins in the cell. The small ribosomal subunit (SSU) binds messenger RNAs (mRNAs) and translates the encoded message by selecting cognate aminoacyl-transfer RNA (tRNA) molecules. The large subunit (LSU) contains the ribosomal catalytic site termed the peptidyl transferase center (PTC), which catalyzes the formation of peptide bonds, thereby polymerizing the amino acids delivered by tRNAs into a polypeptide chain. The nascent polypeptides leave the ribosome through a tunnel in the LSU and interact with protein factors that function in enzymatic processing, targeting, and the membrane insertion of nascent chains at the exit of the ribosomal tunnel. The polypeptide is Large ribosomal subunit protein P1B (Saccharomyces cerevisiae (strain ATCC 204508 / S288c) (Baker's yeast)).